A 120-amino-acid chain; its full sequence is Aspartate 1-decarboxylase (120 aa).

Ser-25 serves as the catalytic Schiff-base intermediate with substrate; via pyruvic acid. A Pyruvic acid (Ser) modification is found at Ser-25. Thr-57 contacts substrate. Tyr-58 functions as the Proton donor in the catalytic mechanism. 73-75 (GAA) provides a ligand contact to substrate.

This sequence belongs to the PanD family. In terms of assembly, heterooctamer of four alpha and four beta subunits. Requires pyruvate as cofactor. In terms of processing, is synthesized initially as an inactive proenzyme, which is activated by self-cleavage at a specific serine bond to produce a beta-subunit with a hydroxyl group at its C-terminus and an alpha-subunit with a pyruvoyl group at its N-terminus.

The protein resides in the cytoplasm. The enzyme catalyses L-aspartate + H(+) = beta-alanine + CO2. It functions in the pathway cofactor biosynthesis; (R)-pantothenate biosynthesis; beta-alanine from L-aspartate: step 1/1. Functionally, catalyzes the pyruvoyl-dependent decarboxylation of aspartate to produce beta-alanine. This chain is Aspartate 1-decarboxylase, found in Cupriavidus taiwanensis (strain DSM 17343 / BCRC 17206 / CCUG 44338 / CIP 107171 / LMG 19424 / R1) (Ralstonia taiwanensis (strain LMG 19424)).